The sequence spans 125 residues: Large ribosomal subunit protein bL12 (125 aa).

This sequence belongs to the bacterial ribosomal protein bL12 family. In terms of assembly, homodimer. Part of the ribosomal stalk of the 50S ribosomal subunit. Forms a multimeric L10(L12)X complex, where L10 forms an elongated spine to which 2 to 4 L12 dimers bind in a sequential fashion. Binds GTP-bound translation factors.

Forms part of the ribosomal stalk which helps the ribosome interact with GTP-bound translation factors. Is thus essential for accurate translation. The chain is Large ribosomal subunit protein bL12 from Anaeromyxobacter dehalogenans (strain 2CP-1 / ATCC BAA-258).